Here is a 390-residue protein sequence, read N- to C-terminus: MKATGIVVEYNPFHNGHKLHLNKARELTQADVVIAVMSGSFVQRGEPAILPKWERTRMALAAGVDMVVELPVSFATQHATIFAEEAVRILDAIHVDTLFFGSEHGVAEDFTLAAKKVVENEARFDEAIQLALVDKKTSYARAYTEAFKKLFGQNLLDITKPNNILGFHYALAAQKQNPSISLHSIPREHAGYHDEEANHDQIASATAIRKLILAGKLEEASHYLPASSIAILRNYEGPFLSWTDYWSFLQYRLIQAGSEELEGIRGVSEGIQNRMQQAATKAQNFSDFIELTKTKRYSNARLQRTALQILLNARSQTSSPYIRILGMNKTGQQYLSLHKKNISLPIITTVSKAPAGLLEEELRATNIYTLAKGLENYQAGDFHIPPILTL.

Residues 7–20 (VVEY…HKLH), Gly101, Asn162, and Arg187 each bind ATP.

It belongs to the TmcAL family.

Its subcellular location is the cytoplasm. It carries out the reaction cytidine(34) in elongator tRNA(Met) + acetate + ATP = N(4)-acetylcytidine(34) in elongator tRNA(Met) + AMP + diphosphate. Functionally, catalyzes the formation of N(4)-acetylcytidine (ac(4)C) at the wobble position of elongator tRNA(Met), using acetate and ATP as substrates. First activates an acetate ion to form acetyladenylate (Ac-AMP) and then transfers the acetyl group to tRNA to form ac(4)C34. This Listeria monocytogenes serotype 4b (strain CLIP80459) protein is tRNA(Met) cytidine acetate ligase.